The sequence spans 132 residues: MTMSDPIADMLTRVRNANMVRHEKLELPASNIKKEIAEILKREGFVKSVEYIEDDKQGVIRMFLKYGANNERVITGLKRISKPGLRVYAKADELPKVLNGLGIALVSTSEGVLTDKEARQRNIGGEVLAYIW.

It belongs to the universal ribosomal protein uS8 family. As to quaternary structure, part of the 30S ribosomal subunit. Contacts proteins S5 and S12.

In terms of biological role, one of the primary rRNA binding proteins, it binds directly to 16S rRNA central domain where it helps coordinate assembly of the platform of the 30S subunit. The polypeptide is Small ribosomal subunit protein uS8 (Macrococcus caseolyticus (strain JCSC5402) (Macrococcoides caseolyticum)).